We begin with the raw amino-acid sequence, 164 residues long: Protein 4 (164 aa).

The sequence is that of Protein 4 from Lettuce big-vein associated virus (isolate Japan/Kagawa) (LBVaV).